Reading from the N-terminus, the 1215-residue chain is DNA-directed RNA polymerase subunit beta' (1215 aa).

The Zn(2+) site is built by C60, C62, C75, and C78. Positions 450, 452, and 454 each coordinate Mg(2+). 4 residues coordinate Zn(2+): C819, C893, C900, and C903.

Belongs to the RNA polymerase beta' chain family. As to quaternary structure, the RNAP catalytic core consists of 2 alpha, 1 beta, 1 beta' and 1 omega subunit. When a sigma factor is associated with the core the holoenzyme is formed, which can initiate transcription. Mg(2+) serves as cofactor. The cofactor is Zn(2+).

It catalyses the reaction RNA(n) + a ribonucleoside 5'-triphosphate = RNA(n+1) + diphosphate. Its function is as follows. DNA-dependent RNA polymerase catalyzes the transcription of DNA into RNA using the four ribonucleoside triphosphates as substrates. The polypeptide is DNA-directed RNA polymerase subunit beta' (Levilactobacillus brevis (strain ATCC 367 / BCRC 12310 / CIP 105137 / JCM 1170 / LMG 11437 / NCIMB 947 / NCTC 947) (Lactobacillus brevis)).